The sequence spans 75 residues: Antimicrobial peptide ctriporin (75 aa).

The signal sequence occupies residues 1-22 (MDSKYLFVFLIFNVIVIDLCQG). The residue at position 41 (lysine 41) is a Lysine amide. The propeptide occupies 47-75 (ELGSQYDYLQDFRKRELDLDDLLSKFPDY).

Belongs to the non-disulfide-bridged peptide (NDBP) superfamily. Short antimicrobial peptide (group 4) family. Expressed by the venom gland.

The protein resides in the secreted. It localises to the target cell membrane. In terms of biological role, antimicrobial peptide that acts by breaking the cell wall. Is active against Gram-positive bacteria, fungi and antibiotic-resistant pathogens: S.aureus (MIC=5 ug/ml), M.luteus (MIC=5 ug/ml), B.thuringiensis (MIC=10 ug/ml), B.subtilis (MIC=10 ug/ml), C.albicans (MIC=20 ug/ml), methicillin-resistant S.aureus (MIC=5-10 ug/ml), and penicillin-resistant S.epidermidis (MIC=10 ug/ml). Also shows potent activity against antibiotic-sensitive and -resistant Acinetobacter baumannii (MIC=10-20 uM). Shows cytolytic activity against human erythrocytes. In vivo, is efficient in curing staphylococcal skin infection in mice, when externally applied. This chain is Antimicrobial peptide ctriporin, found in Chaerilus tricostatus (Scorpion).